Here is a 140-residue protein sequence, read N- to C-terminus: Nucleoside diphosphate kinase (140 aa).

The ATP site is built by Lys11, Phe59, Arg87, Thr93, Arg104, and Asn114. His117 acts as the Pros-phosphohistidine intermediate in catalysis.

Belongs to the NDK family. Homotetramer. The cofactor is Mg(2+).

The protein localises to the cytoplasm. The catalysed reaction is a 2'-deoxyribonucleoside 5'-diphosphate + ATP = a 2'-deoxyribonucleoside 5'-triphosphate + ADP. It carries out the reaction a ribonucleoside 5'-diphosphate + ATP = a ribonucleoside 5'-triphosphate + ADP. Major role in the synthesis of nucleoside triphosphates other than ATP. The ATP gamma phosphate is transferred to the NDP beta phosphate via a ping-pong mechanism, using a phosphorylated active-site intermediate. The polypeptide is Nucleoside diphosphate kinase (Sphingopyxis alaskensis (strain DSM 13593 / LMG 18877 / RB2256) (Sphingomonas alaskensis)).